Here is a 215-residue protein sequence, read N- to C-terminus: Cytochrome b6 (215 aa).

Residues 32–52 (IFYCLGGITLVCFLIQFATGF) traverse the membrane as a helical segment. Cys35 is a binding site for heme c. Residues His86 and His100 each contribute to the heme b site. The next 3 membrane-spanning stretches (helical) occupy residues 90 to 110 (ASMM…TGGF), 116 to 136 (LTWV…VTGY), and 186 to 206 (LHTF…FLMI). Residues His187 and His202 each coordinate heme b.

The protein belongs to the cytochrome b family. PetB subfamily. The 4 large subunits of the cytochrome b6-f complex are cytochrome b6, subunit IV (17 kDa polypeptide, PetD), cytochrome f and the Rieske protein, while the 4 small subunits are PetG, PetL, PetM and PetN. The complex functions as a dimer. It depends on heme b as a cofactor. Heme c is required as a cofactor.

It is found in the cellular thylakoid membrane. In terms of biological role, component of the cytochrome b6-f complex, which mediates electron transfer between photosystem II (PSII) and photosystem I (PSI), cyclic electron flow around PSI, and state transitions. In Synechococcus sp. (strain JA-3-3Ab) (Cyanobacteria bacterium Yellowstone A-Prime), this protein is Cytochrome b6.